We begin with the raw amino-acid sequence, 744 residues long: Elongation factor G, mitochondrial (744 aa).

Residues 39–316 (EKIRNIGISA…AVIDYLPNPG (278 aa)) enclose the tr-type G domain. Residues 48-55 (AHIDSGKT), 115-119 (DTPGH), and 169-172 (NKLD) contribute to the GTP site. Residues 725–735 (VRQYQETQGAS) show a composition bias toward polar residues. The interval 725 to 744 (VRQYQETQGASQPDKKKKKN) is disordered.

The protein belongs to the TRAFAC class translation factor GTPase superfamily. Classic translation factor GTPase family. EF-G/EF-2 subfamily.

The protein resides in the mitochondrion. It participates in protein biosynthesis; polypeptide chain elongation. Mitochondrial GTPase that catalyzes the GTP-dependent ribosomal translocation step during translation elongation. During this step, the ribosome changes from the pre-translocational (PRE) to the post-translocational (POST) state as the newly formed A-site-bound peptidyl-tRNA and P-site-bound deacylated tRNA move to the P and E sites, respectively. Catalyzes the coordinated movement of the two tRNA molecules, the mRNA and conformational changes in the ribosome. Essential during development as it acts as a retrograde signal from mitochondria to the nucleus to slow down cell proliferation if mitochondrial energy output is low. This chain is Elongation factor G, mitochondrial, found in Drosophila pseudoobscura pseudoobscura (Fruit fly).